The sequence spans 230 residues: Prolactin-6A1 (230 aa).

Residues 1 to 29 (MLSLSQPCFSGTLLMLLASNFLLWKNVAP) form the signal peptide. Asparagine 57 carries N-linked (GlcNAc...) asparagine glycosylation. 2 disulfide bridges follow: cysteine 89/cysteine 205 and cysteine 222/cysteine 230.

Belongs to the somatotropin/prolactin family. In terms of tissue distribution, expressed in both placenta and decidual tissues. Detected first in deciduals cells early in gestation and in trophoblasts later in pregnancy.

The protein localises to the secreted. In Mus musculus (Mouse), this protein is Prolactin-6A1 (Prl6a1).